A 276-amino-acid chain; its full sequence is Phospholipid phosphatase 2 (276 aa).

Over 1 to 4 (MERR) the chain is Cytoplasmic. A helical transmembrane segment spans residues 5–25 (WVFVLLDVLCVLVASLPFIIL). The Lumenal portion of the chain corresponds to 26–51 (TLVNAPYKRGFYCGDDSIRYPYRPDT). Residues 52 to 72 (ITHGLMAGVIITATVILVSLG) form a helical membrane-spanning segment. Over 73 to 87 (EAYLVYTDRLYSRSN) the chain is Cytoplasmic. A helical transmembrane segment spans residues 88–108 (FNNYVAAIYKVLGTFLFGAAV). The Lumenal segment spans residues 109–161 (SQSLTDLAKYMIGRLRPSFLAVCDPDWSQVNCSGYVQLEVCRGSPANVTEARL). The tract at residues 117–125 (KYMIGRLRP) is phosphatase sequence motif I. N-linked (GlcNAc...) asparagine glycans are attached at residues Asn-139 and Asn-155. A helical transmembrane segment spans residues 162-182 (SFYSGHSSFGMYCMLFLALYV). The interval 164–167 (YSGH) is phosphatase sequence motif II. Catalysis depends on His-167, which acts as the Proton donors. Residues 183-189 (QARLCWK) are Cytoplasmic-facing. A helical membrane pass occupies residues 190 to 210 (WARLLRPTVQFFLVAFAIYVG). Topologically, residues 211–218 (YTRVSDHK) are lumenal. The tract at residues 212–223 (TRVSDHKHHWSD) is phosphatase sequence motif III. The active-site Nucleophile is His-219. The helical transmembrane segment at 219–239 (HHWSDVLVGLLQGALVACLTV) threads the bilayer. Residues 240–276 (RYVSDFFKSRPPQPCQEDEVPERKPSLSLTLTLGDRP) are Cytoplasmic-facing. Positions 251 to 276 (PQPCQEDEVPERKPSLSLTLTLGDRP) are disordered.

This sequence belongs to the PA-phosphatase related phosphoesterase family. Forms functional homodimers and homooligomers. Can also form heterooligomers with PLPP1 and PLPP3. Post-translationally, N-glycosylated. In terms of tissue distribution, expressed at high levels in lung, liver and kidney; at low levels in heart and brain, and was not detected in skeletal muscle.

Its subcellular location is the membrane. The protein localises to the cell membrane. It localises to the early endosome membrane. The protein resides in the endoplasmic reticulum membrane. It carries out the reaction a 1,2-diacyl-sn-glycero-3-phosphate + H2O = a 1,2-diacyl-sn-glycerol + phosphate. It catalyses the reaction 1,2-dihexadecanoyl-sn-glycero-3-phosphate + H2O = 1,2-dihexadecanoyl-sn-glycerol + phosphate. The enzyme catalyses 1,2-di-(9Z-octadecenoyl)-sn-glycero-3-phosphate + H2O = 1,2-di-(9Z-octadecenoyl)-sn-glycerol + phosphate. The catalysed reaction is a monoacyl-sn-glycero-3-phosphate + H2O = a monoacylglycerol + phosphate. It carries out the reaction (9Z)-octadecenoyl-sn-glycero-3-phosphate + H2O = (9Z-octadecenoyl)-glycerol + phosphate. It catalyses the reaction sphing-4-enine 1-phosphate + H2O = sphing-4-enine + phosphate. The enzyme catalyses an N-acylsphing-4-enine 1-phosphate + H2O = an N-acylsphing-4-enine + phosphate. The catalysed reaction is N-(octanoyl)-sphing-4-enine-1-phosphate + H2O = N-octanoylsphing-4-enine + phosphate. It carries out the reaction N-(9Z-octadecenoyl)-ethanolamine phosphate + H2O = N-(9Z-octadecenoyl) ethanolamine + phosphate. Its pathway is lipid metabolism; phospholipid metabolism. Magnesium-independent phospholipid phosphatase. Insensitive to N-ethylmaleimide. Functionally, magnesium-independent phospholipid phosphatase that catalyzes the dephosphorylation of a variety of glycerolipid and sphingolipid phosphate esters including phosphatidate/PA, lysophosphatidate/LPA, sphingosine 1-phosphate/S1P and ceramide 1-phosphate/C1P. Has no apparent extracellular phosphatase activity and therefore most probably acts intracellularly. Also acts on N-oleoyl ethanolamine phosphate/N-(9Z-octadecenoyl)-ethanolamine phosphate, a potential physiological compound. Through dephosphorylation of these bioactive lipid mediators produces new bioactive compounds and may regulate signal transduction in different cellular processes. Indirectly regulates, for instance, cell cycle G1/S phase transition through its phospholipid phosphatase activity. The sequence is that of Phospholipid phosphatase 2 from Mus musculus (Mouse).